The primary structure comprises 354 residues: MGCTLSAEDKAAVERSKMIDRNLREDGEKAAREVKLLLLGAGESGKSTIVKQMKIIHEAGYSEEECKQYKAVVYSNTIQSIIAIIRAMGRLKIDFGDAARADDARQLFVLAGAAEEGFMTAELAGVIKRLWKDSGVQACFNRSREYQLNDSAAYYLNDLDRIAQPNYIPTQQDVLRTRVKTTGIVETHFTFKDLHFKMFDVGGQRSERKKWIHCFEGVTAIIFCVALSDYDLVLAEDEEMNRMHESMKLFDSICNNKWFTDTSIILFLNKKDLFEEKIKKSPLTICYPEYAGSNTYEEAAAYIQCQFEDLNKRKDTKEIYTHFTCATDTKNVQFVFDAVTDVIIKNNLKDCGLF.

Gly-2 carries the N-myristoyl glycine lipid modification. Residue Cys-3 is the site of S-palmitoyl cysteine attachment. Residues 32 to 354 (REVKLLLLGA…KNNLKDCGLF (323 aa)) form the G-alpha domain. Positions 35–48 (KLLLLGAGESGKST) are G1 motif. Residues 43-48 (ESGKST), 150-151 (DS), and 175-178 (LRTR) each bind GTP. Residue Ser-47 participates in Mg(2+) binding. The interval 173 to 181 (DVLRTRVKT) is G2 motif. Thr-181 contributes to the Mg(2+) binding site. Residues 196–205 (FKMFDVGGQR) are G3 motif. GTP-binding positions include 200 to 204 (DVGGQ), 269 to 272 (NKKD), and Ala-326. A G4 motif region spans residues 265 to 272 (ILFLNKKD). The interval 324-329 (TCATDT) is G5 motif.

It belongs to the G-alpha family. G(i/o/t/z) subfamily. Heterotrimeric G proteins are composed of 3 units; alpha, beta and gamma. The alpha chain contains the guanine nucleotide binding site. Part of a spindle orientation complex at least composed of GNAI1, GPSM2 and NUMA1. Identified in complex with the beta subunit GNB1 and the gamma subunit GNG1. Identified in complex with the beta subunit GNB1 and the gamma subunit GNG2. Component of the TAS2R14-GNAI1 complex, consisting of TAS2R14, GNAI1, GNB1 and GNG2; within the complex interacts with TAS2R14; this complex plays a role in the perception of bitterness. GTP binding causes dissociation of the heterotrimer, liberating the individual subunits so that they can interact with downstream effector proteins. Interacts (GDP-bound form) with GPSM1; this inhibits guanine nucleotide exchange and GTP binding. Interacts (GDP-bound form) with GPSM2 (via GoLoco domains); this inhibits guanine nucleotide exchange. Interacts with RGS10; this strongly enhances GTP hydrolysis. Interacts with RGS1 and RGS16. Interacts with RGS4. Interacts with RGS12. Interacts (via active GTP- or inactive GDP-bound forms) with RGS14 (via RGS and GoLoco domains). Interacts with RGS3, RGS6, RGS7, RGS8, RGS17, RGS18 and RGS20 (in vitro). Interacts (GDP-bound form) with RIC8A (via C-terminus); promoting GNAI1 folding and association with the plasma membrane. Interacts (inactive GDP-bound form) with NUCB1 (via GBA motif); the interaction leads to activation of GNAI1. Interacts (inactive GDP-bound form) with CCDC88C/DAPLE (via GBA motif); the interaction leads to activation of GNAI1. Interacts (inactive GDP-bound form) with CCDC8A/GIV (via GBA motif). Interacts with GPR15. Post-translationally, myristoylation at Gly-2 is required for membrane anchoring before palmitoylation. In terms of processing, palmitoylation at Cys-3 varies with membrane lipid composition.

The protein resides in the nucleus. The protein localises to the cytoplasm. It localises to the cell membrane. Its subcellular location is the cytoskeleton. It is found in the microtubule organizing center. The protein resides in the centrosome. The protein localises to the cell cortex. It localises to the membrane. The enzyme catalyses GTP + H2O = GDP + phosphate + H(+). Functionally, guanine nucleotide-binding proteins (G proteins) function as transducers downstream of G protein-coupled receptors (GPCRs) in numerous signaling cascades. The alpha chain contains the guanine nucleotide binding site and alternates between an active, GTP-bound state and an inactive, GDP-bound state. Signaling by an activated GPCR promotes GDP release and GTP binding. The alpha subunit has a low GTPase activity that converts bound GTP to GDP, thereby terminating the signal. Both GDP release and GTP hydrolysis are modulated by numerous regulatory proteins. Signaling is mediated via effector proteins, such as adenylate cyclase. Inhibits adenylate cyclase activity of ADCY1, ADCY5 and ADCY6, leading to decreased intracellular cAMP levels. The inactive GDP-bound form prevents the association of RGS14 with centrosomes and is required for the translocation of RGS14 from the cytoplasm to the plasma membrane. Required for normal cytokinesis during mitosis. Required for cortical dynein-dynactin complex recruitment during metaphase. This Rattus norvegicus (Rat) protein is Guanine nucleotide-binding protein G(i) subunit alpha-1 (Gnai1).